Reading from the N-terminus, the 530-residue chain is MSRSPQRALPPGALPRLLQAAPAAAPRALLPQWPRRPGRRWPASPLGMKVFRRKALVLCAGYALLLVLTMLNLLDYKWHKEPLQQCNPDGPLGAAAGAAGGSWGRPGPPPAGPPRAHARLDLRTPYRPPAAAVGAAPAAAAGMAGVAAPPGNGTRGTGGVGDKRQLVYVFTTWRSGSSFFGELFNQNPEVFFLYEPVWHVWQKLYPGDAVSLQGAARDMLSALYRCDLSVFQLYSPAGSGGRNLTTLGIFGAATNKVVCSSPLCPAYRKEVVGLVDDRVCKKCPPQRLARFEEECRKYRTLVIKGVRVFDVAVLAPLLRDPALDLKVIHLVRDPRAVASSRIRSRHGLIRESLQVVRSRDPRAHRMPFLEAAGHKLGAKKEGVGGPADYHALGAMEVICNSMAKTLQTALQPPDWLQGHYLVVRYEDLVGDPVKTLRRVYDFVGLLVSPEMEQFALNMTSGSGSSSKPFVVSARNATQAANAWRTALTFQQIKQVEEFCYQPMAVLGYERVNSPEEVKDLSKTLLRKPRL.

At 1 to 54 (MSRSPQRALPPGALPRLLQAAPAAAPRALLPQWPRRPGRRWPASPLGMKVFRRK) the chain is on the cytoplasmic side. Residues 55-75 (ALVLCAGYALLLVLTMLNLLD) traverse the membrane as a helical; Signal-anchor for type II membrane protein segment. Residues 76–530 (YKWHKEPLQQ…SKTLLRKPRL (455 aa)) are Lumenal-facing. The disordered stretch occupies residues 89–119 (DGPLGAAAGAAGGSWGRPGPPPAGPPRAHAR). 173–179 (WRSGSSF) serves as a coordination point for 3'-phosphoadenylyl sulfate. Asn-243 is a glycosylation site (N-linked (GlcNAc...) asparagine). 332–340 (RDPRAVASS) contributes to the 3'-phosphoadenylyl sulfate binding site. N-linked (GlcNAc...) asparagine glycans are attached at residues Asn-457 and Asn-475.

This sequence belongs to the sulfotransferase 1 family. Gal/GlcNAc/GalNAc subfamily. As to quaternary structure, homodimer; disulfide-linked. Homodimerization is not essential for enzyme activity. Post-translationally, glycosylation at Asn-475 is required for catalytic activity. Widely expressed. Highly expressed in bone marrow, peripheral blood leukocytes, spleen, brain, spinal cord, ovary and placenta. Expressed by high endothelial cells (HEVs) and leukocytes.

It is found in the golgi apparatus. The protein localises to the trans-Golgi network membrane. It carries out the reaction 3-O-{N-acetyl-beta-D-glucosaminyl-(1-&gt;3)-beta-D-galactosyl-(1-&gt;3)-N-acetyl-alpha-D-galactosaminyl}-L-threonyl-[protein] + 3'-phosphoadenylyl sulfate = 3-O-{6-O-sulfo-N-acetyl-beta-D-glucosaminyl-(1-&gt;3)-beta-D-galactosyl-(1-&gt;3)-N-acetyl-alpha-D-galactosaminyl}-L-threonyl-[protein] + adenosine 3',5'-bisphosphate + H(+). The enzyme catalyses 3-O-{N-acetyl-beta-D-glucosaminyl-(1-&gt;3)-beta-D-galactosyl-(1-&gt;3)-N-acetyl-alpha-D-galactosaminyl}-L-seryl-[protein] + 3'-phosphoadenylyl sulfate = 3-O-{6-O-sulfo-N-acetyl-beta-D-glucosaminyl-(1-&gt;3)-beta-D-galactosyl-(1-&gt;3)-N-acetyl-alpha-D-galactosaminyl}-L-seryl-[protein] + adenosine 3',5'-bisphosphate + H(+). The catalysed reaction is a 3-O-{beta-D-galactosyl-(1-&gt;3)-[N-acetyl-beta-D-glucosaminyl-(1-&gt;6)]-N-acetyl-alpha-D-galactosaminyl}-L-threonyl-[protein] + 3'-phosphoadenylyl sulfate = 3-O-{beta-D-galactosyl-(1-&gt;3)-[6-O-sulfo-N-acetyl-beta-D-glucosaminyl-(1-&gt;6)]-N-acetyl-alpha-D-galactosaminyl}-L-threonyl-[protein] + adenosine 3',5'-bisphosphate + H(+). It catalyses the reaction 3-O-{beta-D-galactosyl-(1-&gt;3)-[N-acetyl-beta-D-glucosaminyl-(1-&gt;6)]-N-acetyl-alpha-D-galactosaminyl}-L-seryl-[protein] + 3'-phosphoadenylyl sulfate = 3-O-{beta-D-galactosyl-(1-&gt;3)-[6-O-sulfo-N-acetyl-beta-D-glucosaminyl-(1-&gt;6)]-N-acetyl-alpha-D-galactosaminyl}-L-seryl-[protein] + adenosine 3',5'-bisphosphate + H(+). The protein operates within protein modification; carbohydrate sulfation. In terms of biological role, sulfotransferase that utilizes 3'-phospho-5'-adenylyl sulfate (PAPS) as sulfonate donor to catalyze the transfer of sulfate to position 6 of non-reducing N-acetylglucosamine (GlcNAc) residues within keratan-like structures on N-linked glycans and within mucin-associated glycans that can ultimately serve as SELL ligands. SELL ligands are present in high endothelial cells (HEVs) and play a central role in lymphocyte homing at sites of inflammation. Participates in biosynthesis of the SELL ligand sialyl 6-sulfo Lewis X and in lymphocyte homing to Peyer patches. Has no activity toward O-linked sugars. Its substrate specificity may be influenced by its subcellular location. Sulfates GlcNAc residues at terminal, non-reducing ends of oligosaccharide chains. The chain is Carbohydrate sulfotransferase 2 (CHST2) from Homo sapiens (Human).